Here is a 146-residue protein sequence, read N- to C-terminus: Hemoglobin subunit beta (146 aa).

Residues 2–146 (FLTAEEKGLV…VASALAHRYH (145 aa)) form the Globin domain. Ser-44 is modified (phosphoserine). Position 59 is an N6-acetyllysine (Lys-59). Residue His-63 participates in heme b binding. The residue at position 82 (Lys-82) is an N6-acetyllysine. His-92 provides a ligand contact to heme b. Position 93 is an S-nitrosocysteine (Cys-93).

It belongs to the globin family. As to quaternary structure, heterotetramer of two alpha chains and two beta chains. As to expression, red blood cells.

Functionally, involved in oxygen transport from the lung to the various peripheral tissues. The protein is Hemoglobin subunit beta (HBB) of Paguma larvata (Masked palm civet).